The following is a 311-amino-acid chain: tRNA-cytidine(32) 2-sulfurtransferase (311 aa).

Positions 47 to 52 (SGGKDS) match the PP-loop motif motif. Residues cysteine 122, cysteine 125, and cysteine 213 each coordinate [4Fe-4S] cluster.

This sequence belongs to the TtcA family. In terms of assembly, homodimer. Requires Mg(2+) as cofactor. [4Fe-4S] cluster serves as cofactor.

The protein resides in the cytoplasm. The enzyme catalyses cytidine(32) in tRNA + S-sulfanyl-L-cysteinyl-[cysteine desulfurase] + AH2 + ATP = 2-thiocytidine(32) in tRNA + L-cysteinyl-[cysteine desulfurase] + A + AMP + diphosphate + H(+). It functions in the pathway tRNA modification. Catalyzes the ATP-dependent 2-thiolation of cytidine in position 32 of tRNA, to form 2-thiocytidine (s(2)C32). The sulfur atoms are provided by the cysteine/cysteine desulfurase (IscS) system. The chain is tRNA-cytidine(32) 2-sulfurtransferase from Salmonella typhimurium (strain LT2 / SGSC1412 / ATCC 700720).